The chain runs to 387 residues: Chaperone protein DnaJ (387 aa).

In terms of domain architecture, J spans 6–71; that stretch reads DYYEILGVPR…EKRRKYDQFG (66 aa). Residues 146–228 form a CR-type zinc finger; that stretch reads GCEKEIPIYR…CGGTGTVRRQ (83 aa). 8 residues coordinate Zn(2+): Cys159, Cys162, Cys176, Cys179, Cys202, Cys205, Cys216, and Cys219. 4 CXXCXGXG motif repeats span residues 159–166, 176–183, 202–209, and 216–223; these read CSVCGGSG, CQKCGGTG, CDACGGVG, and CRECGGTG.

Belongs to the DnaJ family. As to quaternary structure, homodimer. Zn(2+) is required as a cofactor.

Its subcellular location is the cytoplasm. Its function is as follows. Participates actively in the response to hyperosmotic and heat shock by preventing the aggregation of stress-denatured proteins and by disaggregating proteins, also in an autonomous, DnaK-independent fashion. Unfolded proteins bind initially to DnaJ; upon interaction with the DnaJ-bound protein, DnaK hydrolyzes its bound ATP, resulting in the formation of a stable complex. GrpE releases ADP from DnaK; ATP binding to DnaK triggers the release of the substrate protein, thus completing the reaction cycle. Several rounds of ATP-dependent interactions between DnaJ, DnaK and GrpE are required for fully efficient folding. Also involved, together with DnaK and GrpE, in the DNA replication of plasmids through activation of initiation proteins. This chain is Chaperone protein DnaJ, found in Caldicellulosiruptor saccharolyticus (strain ATCC 43494 / DSM 8903 / Tp8T 6331).